Reading from the N-terminus, the 358-residue chain is Myb family transcription factor IPN2 (358 aa).

The interval 1–20 (MERMFPPKKPSTMNSHDRPM) is disordered. One can recognise an HTH myb-type domain in the interval 32-92 (TDPKPRLRWT…HLQKFRLGKQ (61 aa)). A DNA-binding region (H-T-H motif) is located at residues 63–88 (PKTIMRVMGVKGLTLYHLKSHLQKFR). Positions 127-171 (NMNEMQIEVQRRLHEQLEVQKHLQLRIEAQGKYMQSILEKAYQTL) form a coiled coil. The LHEQLE signature appears at 139–144 (LHEQLE). Positions 310–358 (IYDSKPEEKKFDASMKLERPSPRRAPLGERMSPMITTGTMAQGRSSPFG) are disordered. A compositionally biased stretch (basic and acidic residues) spans 311–330 (YDSKPEEKKFDASMKLERPS). Residues 343-358 (MITTGTMAQGRSSPFG) show a composition bias toward polar residues.

This sequence belongs to the MYB-CC family. Interacts with NSP2. As to expression, expressed in leaves, stems, nodules and roots.

It localises to the nucleus. Transcriptional regulator required for Nod-factor-induced gene expression. Transcription activator involved in the induction of NIN and ENOD40 genes, which are required for rhizobial infection and early nodule development. Possesses strong transactivation activity in vitro. Does not seem to contribute to the early steps of the arbuscular mycorrhizal fungus infection and colonization processes in roots. This chain is Myb family transcription factor IPN2, found in Lotus japonicus (Lotus corniculatus var. japonicus).